Consider the following 259-residue polypeptide: Ribosomal RNA small subunit methyltransferase J (259 aa).

S-adenosyl-L-methionine is bound by residues 101 to 102 (RD), 117 to 118 (ER), 153 to 154 (SS), and Asp-176.

It belongs to the methyltransferase superfamily. RsmJ family.

The protein resides in the cytoplasm. It carries out the reaction guanosine(1516) in 16S rRNA + S-adenosyl-L-methionine = N(2)-methylguanosine(1516) in 16S rRNA + S-adenosyl-L-homocysteine + H(+). In terms of biological role, specifically methylates the guanosine in position 1516 of 16S rRNA. The polypeptide is Ribosomal RNA small subunit methyltransferase J (Vibrio campbellii (strain ATCC BAA-1116)).